A 1161-amino-acid polypeptide reads, in one-letter code: Nardilysin (1161 aa).

Residues 1-18 form the signal peptide; it reads MLRRVAVAAVFATGRKLR. 2 disordered regions span residues 42-105 and 130-218; these read KPFP…KSPS and VEGK…KKTT. 3 positions are modified to phosphoserine: Ser-85, Ser-91, and Ser-93. A compositionally biased stretch (acidic residues) spans 138 to 209; that stretch reads TDEEEEEEEE…EENELEELEE (72 aa). Residue His-244 participates in Zn(2+) binding. Glu-247 functions as the Proton acceptor in the catalytic mechanism. 2 residues coordinate Zn(2+): His-248 and Glu-325.

The protein belongs to the peptidase M16 family. As to quaternary structure, interacts with BACE1 and NRG1. It depends on Zn(2+) as a cofactor. As to expression, testis, and in a lower level in brain, heart and adrenal glands.

The protein resides in the mitochondrion. The protein localises to the cell projection. It is found in the dendrite. The enzyme catalyses Hydrolysis of polypeptides, preferably at -Xaa-|-Arg-Lys-, and less commonly at -Arg-|-Arg-Xaa-, in which Xaa is not Arg or Lys.. In terms of biological role, cleaves peptide substrates on the N-terminus of arginine residues in dibasic pairs. Is a critical activator of BACE1- and ADAM17-mediated pro-neuregulin ectodomain shedding, involved in the positive regulation of axonal maturation and myelination. Required for proper functioning of 2-oxoglutarate dehydrogenase (OGDH). This is Nardilysin from Rattus norvegicus (Rat).